Reading from the N-terminus, the 301-residue chain is Glycerol-3-phosphate dehydrogenase [NAD(P)+] (301 aa).

Positions 13, 33, and 78 each coordinate NADPH. Sn-glycerol 3-phosphate is bound by residues K78 and G106. NADPH is bound at residue A110. Residues K161, D214, S224, R225, and N226 each contribute to the sn-glycerol 3-phosphate site. Residue K161 is the Proton acceptor of the active site. R225 provides a ligand contact to NADPH. E251 contributes to the NADPH binding site.

It belongs to the NAD-dependent glycerol-3-phosphate dehydrogenase family.

The protein localises to the cytoplasm. The enzyme catalyses sn-glycerol 3-phosphate + NAD(+) = dihydroxyacetone phosphate + NADH + H(+). The catalysed reaction is sn-glycerol 3-phosphate + NADP(+) = dihydroxyacetone phosphate + NADPH + H(+). It functions in the pathway membrane lipid metabolism; glycerophospholipid metabolism. Functionally, catalyzes the reduction of the glycolytic intermediate dihydroxyacetone phosphate (DHAP) to sn-glycerol 3-phosphate (G3P), the key precursor for phospholipid synthesis. This chain is Glycerol-3-phosphate dehydrogenase [NAD(P)+], found in Synechococcus sp. (strain RCC307).